The following is an 865-amino-acid chain: Protein translocase subunit SecA (865 aa).

ATP-binding positions include glutamine 93, 111–115 (GEGKT), and aspartate 501. Residues cysteine 841, cysteine 843, cysteine 852, and cysteine 853 each contribute to the Zn(2+) site.

This sequence belongs to the SecA family. Monomer and homodimer. Part of the essential Sec protein translocation apparatus which comprises SecA, SecYEG and auxiliary proteins SecDF-YajC and YidC. The cofactor is Zn(2+).

It localises to the cell inner membrane. The protein localises to the cytoplasm. The catalysed reaction is ATP + H2O + cellular proteinSide 1 = ADP + phosphate + cellular proteinSide 2.. Functionally, part of the Sec protein translocase complex. Interacts with the SecYEG preprotein conducting channel. Has a central role in coupling the hydrolysis of ATP to the transfer of proteins into and across the cell membrane, serving as an ATP-driven molecular motor driving the stepwise translocation of polypeptide chains across the membrane. The chain is Protein translocase subunit SecA from Helicobacter pylori (strain P12).